We begin with the raw amino-acid sequence, 202 residues long: 3-isopropylmalate dehydratase small subunit (202 aa).

This sequence belongs to the LeuD family. LeuD type 1 subfamily. In terms of assembly, heterodimer of LeuC and LeuD.

The enzyme catalyses (2R,3S)-3-isopropylmalate = (2S)-2-isopropylmalate. It functions in the pathway amino-acid biosynthesis; L-leucine biosynthesis; L-leucine from 3-methyl-2-oxobutanoate: step 2/4. Its function is as follows. Catalyzes the isomerization between 2-isopropylmalate and 3-isopropylmalate, via the formation of 2-isopropylmaleate. The chain is 3-isopropylmalate dehydratase small subunit from Nocardioides sp. (strain ATCC BAA-499 / JS614).